Here is a 277-residue protein sequence, read N- to C-terminus: NH(3)-dependent NAD(+) synthetase (277 aa).

46–53 contacts ATP; it reads GISGGQDS. D52 is a Mg(2+) binding site. R142 lines the deamido-NAD(+) pocket. T162 lines the ATP pocket. E167 is a Mg(2+) binding site. Residues K175 and D182 each coordinate deamido-NAD(+). 2 residues coordinate ATP: K191 and T213. Position 263–264 (263–264) interacts with deamido-NAD(+); it reads HK.

It belongs to the NAD synthetase family. Homodimer.

The catalysed reaction is deamido-NAD(+) + NH4(+) + ATP = AMP + diphosphate + NAD(+) + H(+). It participates in cofactor biosynthesis; NAD(+) biosynthesis; NAD(+) from deamido-NAD(+) (ammonia route): step 1/1. Catalyzes the ATP-dependent amidation of deamido-NAD to form NAD. Uses ammonia as a nitrogen source. This Corynebacterium glutamicum (strain R) protein is NH(3)-dependent NAD(+) synthetase.